A 210-amino-acid chain; its full sequence is Troponin I, cardiac muscle (210 aa).

The disordered stretch occupies residues 1 to 43 (MADGSSDAAREPRPAPAPIRRRSSNYRAYATEPHAKKKSKISA). N-acetylalanine is present on A2. A phosphoserine mark is found at S5 and S6. 2 positions are modified to phosphoserine; by PKA and PKD/PRKD1: S23 and S24. Y26 carries the post-translational modification Phosphotyrosine. T31 carries the post-translational modification Phosphothreonine; by STK4/MST1. The interval 32–79 (EPHAKKKSKISASRKLQLKTLLLQIAKQELEREAEERRGEKGRALSTR) is involved in binding TNC. S42 and S44 each carry phosphoserine; by PKC/PRKCE. The residue at position 51 (T51) is a Phosphothreonine; by STK4/MST1. At S77 the chain carries Phosphoserine. T78 carries the phosphothreonine modification. Phosphothreonine; by STK4/MST1 occurs at positions 129 and 143. The tract at residues 129-149 (TQKIFDLRGKFKRPTLRRVRI) is involved in binding TNC and actin. S150 is subject to Phosphoserine; by PAK3. At S166 the chain carries Phosphoserine. T181 bears the Phosphothreonine mark. S199 bears the Phosphoserine mark.

This sequence belongs to the troponin I family. In terms of assembly, binds to actin and tropomyosin. Interacts with TRIM63. Interacts with STK4/MST1. Post-translationally, phosphorylated at Ser-42 and Ser-44 by PRKCE; phosphorylation increases myocardium contractile dysfunction. Phosphorylated at Ser-23 and Ser-24 by PRKD1; phosphorylation reduces myofilament calcium sensitivity. Phosphorylated preferentially at Thr-31. Phosphorylation by STK4/MST1 alters its binding affinity to TNNC1 (cardiac Tn-C) and TNNT2 (cardiac Tn-T).

Its function is as follows. Troponin I is the inhibitory subunit of troponin, the thin filament regulatory complex which confers calcium-sensitivity to striated muscle actomyosin ATPase activity. This Homo sapiens (Human) protein is Troponin I, cardiac muscle (TNNI3).